The primary structure comprises 622 residues: Protein translocase subunit SecD (622 aa).

Transmembrane regions (helical) follow at residues 6–26 (FKIG…YPTV), 460–480 (AGLR…IFYY), 485–505 (MIAD…LAAF), 512–532 (PGIA…VLIF), 559–579 (AIFD…SFGV), and 584–604 (GFAV…IVIT).

It belongs to the SecD/SecF family. SecD subfamily. As to quaternary structure, forms a complex with SecF. Part of the essential Sec protein translocation apparatus which comprises SecA, SecYEG and auxiliary proteins SecDF. Other proteins may also be involved.

The protein resides in the cell inner membrane. Part of the Sec protein translocase complex. Interacts with the SecYEG preprotein conducting channel. SecDF uses the proton motive force (PMF) to complete protein translocation after the ATP-dependent function of SecA. This is Protein translocase subunit SecD from Rhodothermus marinus (strain ATCC 43812 / DSM 4252 / R-10) (Rhodothermus obamensis).